A 355-amino-acid chain; its full sequence is UDP-N-acetylglucosamine--N-acetylmuramyl-(pentapeptide) pyrophosphoryl-undecaprenol N-acetylglucosamine transferase (355 aa).

Residues 14–16, Asn-126, Arg-164, Ser-190, Ile-243, 262–267, and Gln-288 each bind UDP-N-acetyl-alpha-D-glucosamine; these read TGG and ALTVAE.

The protein belongs to the glycosyltransferase 28 family. MurG subfamily.

The protein resides in the cell inner membrane. The catalysed reaction is di-trans,octa-cis-undecaprenyl diphospho-N-acetyl-alpha-D-muramoyl-L-alanyl-D-glutamyl-meso-2,6-diaminopimeloyl-D-alanyl-D-alanine + UDP-N-acetyl-alpha-D-glucosamine = di-trans,octa-cis-undecaprenyl diphospho-[N-acetyl-alpha-D-glucosaminyl-(1-&gt;4)]-N-acetyl-alpha-D-muramoyl-L-alanyl-D-glutamyl-meso-2,6-diaminopimeloyl-D-alanyl-D-alanine + UDP + H(+). It participates in cell wall biogenesis; peptidoglycan biosynthesis. Cell wall formation. Catalyzes the transfer of a GlcNAc subunit on undecaprenyl-pyrophosphoryl-MurNAc-pentapeptide (lipid intermediate I) to form undecaprenyl-pyrophosphoryl-MurNAc-(pentapeptide)GlcNAc (lipid intermediate II). The chain is UDP-N-acetylglucosamine--N-acetylmuramyl-(pentapeptide) pyrophosphoryl-undecaprenol N-acetylglucosamine transferase from Psychromonas ingrahamii (strain DSM 17664 / CCUG 51855 / 37).